The following is a 279-amino-acid chain: Probable endonuclease 4 (279 aa).

Positions 69, 109, 145, 179, 182, 216, 229, 231, and 261 each coordinate Zn(2+).

Belongs to the AP endonuclease 2 family. Requires Zn(2+) as cofactor.

The enzyme catalyses Endonucleolytic cleavage to 5'-phosphooligonucleotide end-products.. Functionally, endonuclease IV plays a role in DNA repair. It cleaves phosphodiester bonds at apurinic or apyrimidinic (AP) sites, generating a 3'-hydroxyl group and a 5'-terminal sugar phosphate. This Buchnera aphidicola subsp. Schizaphis graminum (strain Sg) protein is Probable endonuclease 4.